A 383-amino-acid polypeptide reads, in one-letter code: MAKHLFTSESVSEGHPDKIADQISDAVLDAILAQDPKARVACETYVKTGMVLVGGEVTTSAWVDIEELTRKTVREIGYVHSDMGFDADSCAVLNAIGKQSPDINQGVDRADPKEQGAGDQGLMFGYASNETDILMPAPITYAHALVKRQSEVRKDGTLPWLRPDAKSQVTFAYEDNKIVGIDAIVLSTQHSPDIAQADLIEGVMETIIKPVLPAQWLNKDTKYFINPTGRFVIGGPMGDCGLTGRKIIVDTYGGMARHGGGAFSGKDPSKVDRSAAYAARYVAKNIVAAGLADRCEIQVSYAIGVAEPTSISVETFGTGKVSEEVLIKLVRQHFDLRPYGLTEMLNLARPIYQATAAYGHFGRNEFPWEATDKADALRADAGL.

His-15 lines the ATP pocket. Residue Asp-17 participates in Mg(2+) binding. K(+) is bound at residue Glu-43. L-methionine-binding residues include Glu-56 and Gln-99. A flexible loop region spans residues 99 to 109 (QSPDINQGVDR). ATP contacts are provided by residues 164-166 (DAK), 230-231 (RF), Asp-239, 245-246 (RK), Ala-262, and Lys-266. Asp-239 is a binding site for L-methionine. Lys-270 is a binding site for L-methionine.

The protein belongs to the AdoMet synthase family. As to quaternary structure, homotetramer; dimer of dimers. Mg(2+) serves as cofactor. Requires K(+) as cofactor.

The protein resides in the cytoplasm. It catalyses the reaction L-methionine + ATP + H2O = S-adenosyl-L-methionine + phosphate + diphosphate. It functions in the pathway amino-acid biosynthesis; S-adenosyl-L-methionine biosynthesis; S-adenosyl-L-methionine from L-methionine: step 1/1. Functionally, catalyzes the formation of S-adenosylmethionine (AdoMet) from methionine and ATP. The overall synthetic reaction is composed of two sequential steps, AdoMet formation and the subsequent tripolyphosphate hydrolysis which occurs prior to release of AdoMet from the enzyme. The polypeptide is S-adenosylmethionine synthase (Shewanella sp. (strain ANA-3)).